The chain runs to 573 residues: Transcription factor E3 (573 aa).

Serine 47 is subject to Phosphoserine; by MTOR. The disordered stretch occupies residues 91-151; the sequence is TLSASSSAEG…SPAPASPAIS (61 aa). Positions 107-126 are enriched in low complexity; it reads SSSSSSRVLLRQQLMRAQAQ. Residues 127–136 show a composition bias toward basic and acidic residues; that stretch reads EQERRERREQ. The span at 137 to 151 shows a compositional bias: low complexity; that stretch reads ASSFPSPAPASPAIS. At arginine 186 the chain carries Asymmetric dimethylarginine. The interval 209–248 is disordered; the sequence is LASQALTPPPGGASVQPLPTPEAAHAPGPTSSAPNSPMAL. The strong transcription activation domain stretch occupies residues 258 to 269; it reads EIDDVIDEIISL. Serine 319 is subject to Phosphoserine; by MTOR. A Glycyl lysine isopeptide (Lys-Gly) (interchain with G-Cter in SUMO2) cross-link involves residue lysine 337. Positions 344–397 constitute a bHLH domain; that stretch reads QKKDNHNLIERRRRFNINDRIKELGTLIPKSSDPEMRWNKGTILKASVDYIRKL. The short motif at 354-357 is the Nuclear localization signal element; sequence RRRR. Residues 407 to 428 form a leucine-zipper region; it reads LESRQRSLEQANRSLQLRIQEL. The segment at 531 to 573 is disordered; the sequence is VGGLSGGTLSPLRAASDPLLSSVSPAVSKASSRRSSFSMEEES. A compositionally biased stretch (low complexity) spans 537–573; the sequence is GTLSPLRAASDPLLSSVSPAVSKASSRRSSFSMEEES. Residues serine 540, serine 546, serine 552, serine 554, serine 558, and serine 566 each carry the phosphoserine modification.

This sequence belongs to the MiT/TFE family. Homodimer and heterodimer; with TFEB or MITF. Interacts with RRAGC/RagC GDP-bound and RRAGD/RagD GDP-bound; promoting its recruitment to lysosomal membrane in the presence of nutrients. In terms of processing, phosphorylation ar Ser-47 and Ser-319 by MTOR via non-canonical mTORC1 pathway regulates its stability and subcellular location, respectively. When nutrients are present, phosphorylation by MTOR at Ser-47 promotes ubiquitination by the SCF(BTRC) complex, followed by degradation. When nutrients are present, phosphorylation by MTOR at Ser-319 also promotes association with 14-3-3/YWHA adapters and retention in the cytosol. Phosphorylation at Ser-47 plays a more critical role than phosphorylation at Ser-319 for TFE3 inactivation. Inhibition of mTORC1, starvation and lysosomal disruption, promotes dephosphorylation and transcription factor activity. Ubiquitinated by the SCF(BTRC) and SCF(FBXW11) complexes following phosphorylation at Ser-47 by MTOR, leading to its degradation by the proteasome. Post-translationally, sumoylated; does not affect dimerization with MITF.

The protein localises to the cytoplasm. It localises to the cytosol. The protein resides in the nucleus. Its subcellular location is the lysosome membrane. Transcription factor that acts as a master regulator of lysosomal biogenesis and immune response. Specifically recognizes and binds E-box sequences (5'-CANNTG-3'); efficient DNA-binding requires dimerization with itself or with another MiT/TFE family member such as TFEB or MITF. Involved in the cellular response to amino acid availability by acting downstream of MTOR: in the presence of nutrients, TFE3 phosphorylation by MTOR promotes its inactivation. Upon starvation or lysosomal stress, inhibition of MTOR induces TFE3 dephosphorylation, resulting in transcription factor activity. Specifically recognizes and binds the CLEAR-box sequence (5'-GTCACGTGAC-3') present in the regulatory region of many lysosomal genes, leading to activate their expression, thereby playing a central role in expression of lysosomal genes. Maintains the pluripotent state of embryonic stem cells by promoting the expression of genes such as ESRRB; mTOR-dependent TFE3 cytosolic retention and inactivation promotes exit from pluripotency. Required to maintain the naive pluripotent state of hematopoietic stem cell; mTOR-dependent cytoplasmic retention of TFE3 promotes the exit of hematopoietic stem cell from pluripotency. TFE3 activity is also involved in the inhibition of neuronal progenitor differentiation. Acts as a positive regulator of browning of adipose tissue by promoting expression of target genes; mTOR-dependent phosphorylation promotes cytoplasmic retention of TFE3 and inhibits browning of adipose tissue. In association with TFEB, activates the expression of CD40L in T-cells, thereby playing a role in T-cell-dependent antibody responses in activated CD4(+) T-cells and thymus-dependent humoral immunity. Specifically recognizes the MUE3 box, a subset of E-boxes, present in the immunoglobulin enhancer. It also binds very well to a USF/MLTF site. May regulate lysosomal positioning in response to nutrient deprivation by promoting the expression of PIP4P1. The polypeptide is Transcription factor E3 (Bos taurus (Bovine)).